The primary structure comprises 508 residues: CBL-interacting protein kinase 19 (508 aa).

The disordered stretch occupies residues 1 to 24; sequence MAATPPSSQHRRPLSSSASAASLA. Residues 14–24 show a composition bias toward low complexity; it reads LSSSASAASLA. Residues 37–291 form the Protein kinase domain; the sequence is YELGRLLGHG…VKEVMESRWF (255 aa). Residues 43 to 51 and Lys66 each bind ATP; that span reads LGHGTFAKV. Catalysis depends on Asp159, which acts as the Proton acceptor. The tract at residues 177 to 206 is activation loop; it reads DFGLSAVADQFHPDGLLHTFCGTPSYVAPE. The disordered stretch occupies residues 311–372; that stretch reads ADGDNDMPEL…EERRQRPLGS (62 aa). Residues 313–322 show a composition bias toward acidic residues; it reads GDNDMPELEP. Residues 323 to 337 are compositionally biased toward pro residues; it reads SEPPPPPPFPPPPPQ. Over residues 338–347 the composition is skewed to acidic residues; sequence QDDDGEESGW. The 45-residue stretch at 354–398 folds into the NAF domain; that stretch reads ASCPATLSSEERRQRPLGSLTRPASLNAFDIISFSKGFDLSGLFE. The tract at residues 401–430 is PPI; the sequence is GSEVRFISAEPMQTIITKLEEIAKVKSFFV.

Belongs to the protein kinase superfamily. CAMK Ser/Thr protein kinase family. SNF1 subfamily. Requires Mn(2+) as cofactor. In terms of processing, autophosphorylated. As to expression, expressed in roots, leaf blades and sheaths and panicles.

The enzyme catalyses L-seryl-[protein] + ATP = O-phospho-L-seryl-[protein] + ADP + H(+). It carries out the reaction L-threonyl-[protein] + ATP = O-phospho-L-threonyl-[protein] + ADP + H(+). Its function is as follows. CIPK serine-threonine protein kinases interact with CBL proteins. Binding of a CBL protein to the regulatory NAF domain of CIPK protein lead to the activation of the kinase in a calcium-dependent manner. The polypeptide is CBL-interacting protein kinase 19 (CIPK19) (Oryza sativa subsp. japonica (Rice)).